A 262-amino-acid polypeptide reads, in one-letter code: 4-hydroxy-2-oxo-heptane-1,7-dioate aldolase (262 aa).

His45 serves as the catalytic Proton acceptor. Residue Gln147 coordinates substrate. A divalent metal cation is bound at residue Glu149. Residues Ala174 and Asp175 each contribute to the substrate site. Asp175 serves as a coordination point for a divalent metal cation.

Belongs to the HpcH/HpaI aldolase family. Homohexamer; trimer of dimers. Requires a divalent metal cation as cofactor.

It catalyses the reaction 4-hydroxy-2-oxoheptanedioate = succinate semialdehyde + pyruvate. It functions in the pathway aromatic compound metabolism; 4-hydroxyphenylacetate degradation; pyruvate and succinate semialdehyde from 4-hydroxyphenylacetate: step 7/7. In terms of biological role, catalyzes the reversible retro-aldol cleavage of 4-hydroxy-2-ketoheptane-1,7-dioate (HKHD) to pyruvate and succinic semialdehyde. This chain is 4-hydroxy-2-oxo-heptane-1,7-dioate aldolase, found in Shigella sonnei (strain Ss046).